We begin with the raw amino-acid sequence, 303 residues long: Ribonuclease Z (303 aa).

Zn(2+) contacts are provided by H61, H63, D65, H66, H138, D206, and H265. D65 (proton acceptor) is an active-site residue.

This sequence belongs to the RNase Z family. In terms of assembly, homodimer. Requires Zn(2+) as cofactor.

The catalysed reaction is Endonucleolytic cleavage of RNA, removing extra 3' nucleotides from tRNA precursor, generating 3' termini of tRNAs. A 3'-hydroxy group is left at the tRNA terminus and a 5'-phosphoryl group is left at the trailer molecule.. In terms of biological role, zinc phosphodiesterase, which displays some tRNA 3'-processing endonuclease activity. Probably involved in tRNA maturation, by removing a 3'-trailer from precursor tRNA. This is Ribonuclease Z from Agathobacter rectalis (strain ATCC 33656 / DSM 3377 / JCM 17463 / KCTC 5835 / VPI 0990) (Eubacterium rectale).